We begin with the raw amino-acid sequence, 863 residues long: Linoleate 9S-lipoxygenase 1 (863 aa).

The PLAT domain occupies Arg32–Ala158. The 703-residue stretch at Ser161–Ile863 folds into the Lipoxygenase domain. The tract at residues Asn204–Glu244 is disordered. Fe cation is bound by residues His518, His523, His709, Asn713, and Ile863.

The protein belongs to the lipoxygenase family. As to quaternary structure, monomer. It depends on Fe cation as a cofactor.

It is found in the cytoplasm. The catalysed reaction is (9Z,12Z)-octadecadienoate + O2 = (9S)-hydroperoxy-(10E,12Z)-octadecadienoate. It participates in lipid metabolism; oxylipin biosynthesis. Functionally, plant lipoxygenase may be involved in a number of diverse aspects of plant physiology including growth and development, pest resistance, and senescence or responses to wounding. This lipoxygenase introduces molecular oxygen exclusively into the C-9 position of linoleic and linolenic. This Oryza sativa subsp. japonica (Rice) protein is Linoleate 9S-lipoxygenase 1.